We begin with the raw amino-acid sequence, 368 residues long: tRNA(Met) cytidine acetate ligase (368 aa).

Residues 7 to 20, Gly96, Asn152, and Arg175 each bind ATP; that span reads IAEF…HKYL.

The protein belongs to the TmcAL family.

It is found in the cytoplasm. The enzyme catalyses cytidine(34) in elongator tRNA(Met) + acetate + ATP = N(4)-acetylcytidine(34) in elongator tRNA(Met) + AMP + diphosphate. In terms of biological role, catalyzes the formation of N(4)-acetylcytidine (ac(4)C) at the wobble position of elongator tRNA(Met), using acetate and ATP as substrates. First activates an acetate ion to form acetyladenylate (Ac-AMP) and then transfers the acetyl group to tRNA to form ac(4)C34. This chain is tRNA(Met) cytidine acetate ligase, found in Streptococcus pyogenes serotype M3 (strain SSI-1).